Here is a 397-residue protein sequence, read N- to C-terminus: Iron-sulfur cluster assembly SufBD family protein Mb1497 (397 aa).

The protein belongs to the iron-sulfur cluster assembly SufBD family.

The polypeptide is Iron-sulfur cluster assembly SufBD family protein Mb1497 (Mycobacterium bovis (strain ATCC BAA-935 / AF2122/97)).